A 218-amino-acid polypeptide reads, in one-letter code: Ras-related protein Rab-11B (218 aa).

Glycine 2 is subject to N-acetylglycine. Arginine 4 carries the citrulline modification. Serine 20, glycine 21, glycine 23, lysine 24, serine 25, asparagine 26, asparagine 37, leucine 38, serine 40, serine 42, and threonine 43 together coordinate GTP. Serine 25 is a binding site for Mg(2+). The short motif at phenylalanine 36–glutamate 47 is the Switch 1 element. Residues threonine 43 and aspartate 66 each coordinate Mg(2+). Residues threonine 67 to glycine 86 carry the Switch 2 motif. GTP-binding residues include glycine 69, asparagine 124, lysine 125, aspartate 127, alanine 155, and leucine 156. The interval arginine 184–leucine 218 is disordered. 2 S-geranylgeranyl cysteine lipidation sites follow: cysteine 214 and cysteine 215. A Cysteine methyl ester modification is found at cysteine 215. A propeptide spans glutamine 216 to leucine 218 (removed in mature form).

It belongs to the small GTPase superfamily. Rab family. As to quaternary structure, interacts with KCNMA1. Interacts with RAB11FIP1, RAB11FIP2, RAB11FIP3 and RAB11FIP4. May interact with TBC1D14. Interacts with ATP6V1E1. Interacts with PI4KB. Interacts (GDP-bound form) with ZFYVE27. Interacts (GDP-bound form) with KIF5A in a ZFYVE27-dependent manner. Interacts with RELCH. Interacts (in GTP-bound form) with TBC1D8B (via domain Rab-GAP TBC). Forms a complex containing RAB11B, ASAP1, Rabin8/RAB3IP, RAP11FIP3 and ARF4. Interacts with WDR44. Mg(2+) is required as a cofactor. Citrullinated by PADI4. In terms of tissue distribution, abundantly expressed in brain, heart and testis. Also detected in kidney and pancreatic islets.

It is found in the recycling endosome membrane. The protein resides in the cytoplasmic vesicle. The protein localises to the secretory vesicle. Its subcellular location is the synaptic vesicle membrane. It localises to the phagosome membrane. It catalyses the reaction GTP + H2O = GDP + phosphate + H(+). Regulated by guanine nucleotide exchange factors (GEFs) which promote the exchange of bound GDP for free GTP. Regulated by GTPase activating proteins (GAPs) which increase the GTP hydrolysis activity. Inhibited by GDP dissociation inhibitors (GDIs) which prevent Rab-GDP dissociation. Functionally, the small GTPases Rab are key regulators of intracellular membrane trafficking, from the formation of transport vesicles to their fusion with membranes. Rabs cycle between an inactive GDP-bound form and an active GTP-bound form that is able to recruit to membranes different set of downstream effectors directly responsible for vesicle formation, movement, tethering and fusion. The small Rab GTPase RAB11B plays a role in endocytic recycling, regulating apical recycling of several transmembrane proteins including cystic fibrosis transmembrane conductance regulator/CFTR, epithelial sodium channel/ENaC, potassium voltage-gated channel, and voltage-dependent L-type calcium channel. May also regulate constitutive and regulated secretion, like insulin granule exocytosis. Required for melanosome transport and release from melanocytes. Also regulates V-ATPase intracellular transport in response to extracellular acidosis. Promotes Rabin8/RAB3IP preciliary vesicular trafficking to mother centriole by forming a ciliary targeting complex containing Rab11, ASAP1, Rabin8/RAB3IP, RAB11FIP3 and ARF4, thereby regulating ciliogenesis initiation. On the contrary, upon LPAR1 receptor signaling pathway activation, interaction with phosphorylated WDR44 prevents Rab11-RAB3IP-RAB11FIP3 complex formation and cilia growth. The sequence is that of Ras-related protein Rab-11B from Mus musculus (Mouse).